Reading from the N-terminus, the 218-residue chain is GTP cyclohydrolase 1 (218 aa).

3 residues coordinate Zn(2+): Cys-109, His-112, and Cys-180.

Belongs to the GTP cyclohydrolase I family. In terms of assembly, toroid-shaped homodecamer, composed of two pentamers of five dimers.

The enzyme catalyses GTP + H2O = 7,8-dihydroneopterin 3'-triphosphate + formate + H(+). Its pathway is cofactor biosynthesis; 7,8-dihydroneopterin triphosphate biosynthesis; 7,8-dihydroneopterin triphosphate from GTP: step 1/1. The protein is GTP cyclohydrolase 1 of Aeromonas salmonicida (strain A449).